The sequence spans 432 residues: Adenylosuccinate synthetase (432 aa).

Residues 13–19 (GDEGKGK) and 41–43 (GHT) contribute to the GTP site. Asp14 acts as the Proton acceptor in catalysis. Asp14 and Gly41 together coordinate Mg(2+). Residues 14–17 (DEGK), 39–42 (NAGH), Thr130, Arg144, Gln225, Thr240, and Arg304 each bind IMP. His42 functions as the Proton donor in the catalytic mechanism. A substrate-binding site is contributed by 300 to 306 (AVTGRPR). GTP contacts are provided by residues Arg306, 332–334 (KLD), and 415–417 (STG).

This sequence belongs to the adenylosuccinate synthetase family. In terms of assembly, homodimer. Requires Mg(2+) as cofactor.

Its subcellular location is the cytoplasm. It catalyses the reaction IMP + L-aspartate + GTP = N(6)-(1,2-dicarboxyethyl)-AMP + GDP + phosphate + 2 H(+). Its pathway is purine metabolism; AMP biosynthesis via de novo pathway; AMP from IMP: step 1/2. Its function is as follows. Plays an important role in the de novo pathway of purine nucleotide biosynthesis. Catalyzes the first committed step in the biosynthesis of AMP from IMP. The sequence is that of Adenylosuccinate synthetase from Haemophilus influenzae (strain ATCC 51907 / DSM 11121 / KW20 / Rd).